The following is a 581-amino-acid chain: Arginine--tRNA ligase (581 aa).

Residues 126-136 (PNLAKEMHVGH) carry the 'HIGH' region motif.

This sequence belongs to the class-I aminoacyl-tRNA synthetase family. In terms of assembly, monomer.

The protein resides in the cytoplasm. The enzyme catalyses tRNA(Arg) + L-arginine + ATP = L-arginyl-tRNA(Arg) + AMP + diphosphate. This chain is Arginine--tRNA ligase, found in Shewanella sp. (strain MR-7).